The following is a 281-amino-acid chain: Diphthine methyl ester synthase (281 aa).

S-adenosyl-L-methionine-binding positions include Leu9, Asp84, Gly87, 112 to 113 (SI), and Leu163. A Phosphoserine modification is found at Ser171. 2 residues coordinate S-adenosyl-L-methionine: Val225 and His250.

This sequence belongs to the diphthine synthase family.

The enzyme catalyses 2-[(3S)-amino-3-carboxypropyl]-L-histidyl-[translation elongation factor 2] + 4 S-adenosyl-L-methionine = diphthine methyl ester-[translation elongation factor 2] + 4 S-adenosyl-L-homocysteine + 3 H(+). Its pathway is protein modification; peptidyl-diphthamide biosynthesis. Its function is as follows. S-adenosyl-L-methionine-dependent methyltransferase that catalyzes four methylations of the modified target histidine residue in translation elongation factor 2 (EF-2), to form an intermediate called diphthine methyl ester. The four successive methylation reactions represent the second step of diphthamide biosynthesis. This chain is Diphthine methyl ester synthase (Dph5), found in Mus musculus (Mouse).